We begin with the raw amino-acid sequence, 506 residues long: Histidine ammonia-lyase (506 aa).

Residues 143-145 (ASG) constitute a cross-link (5-imidazolinone (Ala-Gly)). Serine 144 bears the 2,3-didehydroalanine (Ser) mark.

It belongs to the PAL/histidase family. Contains an active site 4-methylidene-imidazol-5-one (MIO), which is formed autocatalytically by cyclization and dehydration of residues Ala-Ser-Gly.

The protein localises to the cytoplasm. It catalyses the reaction L-histidine = trans-urocanate + NH4(+). The protein operates within amino-acid degradation; L-histidine degradation into L-glutamate; N-formimidoyl-L-glutamate from L-histidine: step 1/3. The chain is Histidine ammonia-lyase from Salmonella paratyphi B (strain ATCC BAA-1250 / SPB7).